Reading from the N-terminus, the 207-residue chain is Large ribosomal subunit protein uL4 (207 aa).

Residues 48–87 (THAVKNRSAVSGGGKKPWRQKGTGRARQGSIRSPQFRGGG) are disordered.

It belongs to the universal ribosomal protein uL4 family. Part of the 50S ribosomal subunit.

Functionally, one of the primary rRNA binding proteins, this protein initially binds near the 5'-end of the 23S rRNA. It is important during the early stages of 50S assembly. It makes multiple contacts with different domains of the 23S rRNA in the assembled 50S subunit and ribosome. In terms of biological role, forms part of the polypeptide exit tunnel. This chain is Large ribosomal subunit protein uL4, found in Limosilactobacillus reuteri subsp. reuteri (strain JCM 1112) (Lactobacillus reuteri).